We begin with the raw amino-acid sequence, 37 residues long: Large ribosomal subunit protein bL36A (37 aa).

The protein belongs to the bacterial ribosomal protein bL36 family.

This chain is Large ribosomal subunit protein bL36A, found in Leifsonia xyli subsp. xyli (strain CTCB07).